Consider the following 1129-residue polypeptide: CRISPR-associated endonuclease Cas12b (1129 aa).

Positions 1 to 14 (MAVKSIKVKLRLDD) are WED-I (OBD-I) domain. Residues 4-9 (KSIKVK) form a binds sgRNA region. Positions 15–386 (MPEIRAGLWK…FATFTLPDAT (372 aa)) are REC1 (Helical-1)domain. Binds DNA protospacer adjacent motif (PAM) on target DNA regions lie at residues 118 to 122 (QQIAR) and 143 to 144 (GN). The tract at residues 387-518 (AHPIWTRFDK…QSQSEARGER (132 aa)) is WED-II (OBD-II) domain. The tract at residues 442–446 (SMSEQ) is binds sgRNA. The interval 519–628 (RPPYAAVFRL…LLKLPGETES (110 aa)) is ruvC-I domain. The active-site For DNase activity of RuvC domain is the D570. The interval 573-574 (LR) is binds non-target ssDNA. Residues 629–658 (KDLRAIREERQRTLRQLRTQLAYLRLLVRC) form a bridge helix domain region. The REC2 (Helical-II) domain stretch occupies residues 659–784 (GSEDVGRRER…SFFGKVSGQV (126 aa)). Binds sgRNA regions lie at residues 742-746 (RPKIR), 753-754 (VG), 792-796 (RFAIT), 800-819 (HIDH…IIME), and 835-839 (WVAKY). The ruvC-II domain stretch occupies residues 785–900 (IRAEKGSRFA…GTMYAAFSSR (116 aa)). The For DNase activity of RuvC domain role is filled by E848. Residues 897 to 900 (FSSR) form a binds non-target ssDNA region. Residues S899 and R911 each contribute to the phosphate site. The tract at residues 901-974 (FDARTGAPGI…SAEEGDFHQI (74 aa)) is nuc-I domain. Residues 973-978 (QIHADL) form a binds sgRNA region. Residues 975 to 993 (HADLNAAQNLQQRLWSDFD) form a ruvC-III domain region. Residue D977 is the For DNase activity of RuvC domain of the active site. A nuc-II domain region spans residues 994-1129 (ISQIRLRCDW…DSACENTGDI (136 aa)).

This sequence belongs to the CRISPR-associated endonuclease Cas12b family. In terms of assembly, monomer. A divalent metal cation is required as a cofactor.

Its function is as follows. CRISPR (clustered regularly interspaced short palindromic repeat), is an adaptive immune system that provides protection against mobile genetic elements (viruses, transposable elements and conjugative plasmids). CRISPR clusters contain sequences complementary to antecedent mobile elements and target invading nucleic acids. CRISPR clusters are transcribed and processed into CRISPR RNA (crRNA). In type II CRISPR systems correct processing of pre-crRNA requires a trans-encoded small RNA (tracrRNA), endogenous ribonuclease 3 (rnc) and this protein. The tracrRNA serves as a guide for ribonuclease 3-aided processing of pre-crRNA. Protein-crRNA-tracrRNA endonucleolytically cleave dsDNA target complementary to the spacer; protein is inactive in the absence of crRNA homologous to the target and tracrRNA. Recognizes a short motif in the CRISPR repeat sequences (the 5' PAM or protospacer adjacent motif, TTN in this organism) to help distinguish self versus nonself, as targets within the bacterial CRISPR locus do not have PAMs. PAM recognition is also required for catalytic activity. Cleavage results in staggered 6-8 base 5'-overhangs 14-17 and 23-24 bases downstream of the PAM (protospacer adjacent motif) on the non-target and target strands respectively. Both target and non-target strand DNA are probably independently cleaved in the same active site. The protein is CRISPR-associated endonuclease Cas12b of Alicyclobacillus acidoterrestris (strain ATCC 49025 / DSM 3922 / CIP 106132 / NCIMB 13137 / GD3B).